Reading from the N-terminus, the 392-residue chain is Succinate--CoA ligase [ADP-forming] subunit beta (392 aa).

Positions 9-248 constitute an ATP-grasp domain; the sequence is KEILRGFGVT…TSEEDPLEVE (240 aa). ATP is bound by residues lysine 50, 57–59, glutamate 103, methionine 106, and glutamate 111; that span reads GRG. Mg(2+) is bound by residues asparagine 203 and aspartate 217. Substrate contacts are provided by residues asparagine 268 and 325–327; that span reads GIV.

This sequence belongs to the succinate/malate CoA ligase beta subunit family. As to quaternary structure, heterotetramer of two alpha and two beta subunits. It depends on Mg(2+) as a cofactor.

The enzyme catalyses succinate + ATP + CoA = succinyl-CoA + ADP + phosphate. It carries out the reaction GTP + succinate + CoA = succinyl-CoA + GDP + phosphate. The protein operates within carbohydrate metabolism; tricarboxylic acid cycle; succinate from succinyl-CoA (ligase route): step 1/1. Succinyl-CoA synthetase functions in the citric acid cycle (TCA), coupling the hydrolysis of succinyl-CoA to the synthesis of either ATP or GTP and thus represents the only step of substrate-level phosphorylation in the TCA. The beta subunit provides nucleotide specificity of the enzyme and binds the substrate succinate, while the binding sites for coenzyme A and phosphate are found in the alpha subunit. This chain is Succinate--CoA ligase [ADP-forming] subunit beta, found in Chloroherpeton thalassium (strain ATCC 35110 / GB-78).